A 577-amino-acid chain; its full sequence is Nuclear fusion protein tht1 (577 aa).

The signal sequence occupies residues 1–29 (MKFHPTRPFGLYFEFFIIISFFFTSESTG). At 30–404 (DVESFMKYSN…MNVYFKGLSN (375 aa)) the chain is on the lumenal side. 2 N-linked (GlcNAc...) asparagine glycosylation sites follow: Asn-163 and Asn-372. Residues 405–425 (IISSFAFIGFTLFATLSSLFF) form a helical membrane-spanning segment. The Cytoplasmic portion of the chain corresponds to 426–433 (KVLKIHRR). Residues 434–454 (PIIVFGSLSIIFIHIYCFKIT) traverse the membrane as a helical segment. The Lumenal segment spans residues 455-470 (SWVNLYGWITCTIART). A helical membrane pass occupies residues 471–491 (LSFIKLNIRTFYLTAFLCALL). Over 492-577 (NFLRYLKYRN…ESLEQSPWWD (86 aa)) the chain is Cytoplasmic.

This sequence belongs to the KAR5 family. N-glycosylated.

It is found in the endoplasmic reticulum membrane. Its subcellular location is the nucleus membrane. Its function is as follows. Required for nuclear membrane fusion during karyogamy. This Schizosaccharomyces pombe (strain 972 / ATCC 24843) (Fission yeast) protein is Nuclear fusion protein tht1 (tht1).